Here is a 220-residue protein sequence, read N- to C-terminus: Thiamine-phosphate synthase (220 aa).

4-amino-2-methyl-5-(diphosphooxymethyl)pyrimidine-binding positions include 47–51 (QYREK) and N78. D79 and D98 together coordinate Mg(2+). S117 provides a ligand contact to 4-amino-2-methyl-5-(diphosphooxymethyl)pyrimidine. 143–145 (TAT) contacts 2-[(2R,5Z)-2-carboxy-4-methylthiazol-5(2H)-ylidene]ethyl phosphate. K146 serves as a coordination point for 4-amino-2-methyl-5-(diphosphooxymethyl)pyrimidine. 2-[(2R,5Z)-2-carboxy-4-methylthiazol-5(2H)-ylidene]ethyl phosphate is bound by residues G174 and 194 to 195 (IS).

The protein belongs to the thiamine-phosphate synthase family. It depends on Mg(2+) as a cofactor.

The catalysed reaction is 2-[(2R,5Z)-2-carboxy-4-methylthiazol-5(2H)-ylidene]ethyl phosphate + 4-amino-2-methyl-5-(diphosphooxymethyl)pyrimidine + 2 H(+) = thiamine phosphate + CO2 + diphosphate. It catalyses the reaction 2-(2-carboxy-4-methylthiazol-5-yl)ethyl phosphate + 4-amino-2-methyl-5-(diphosphooxymethyl)pyrimidine + 2 H(+) = thiamine phosphate + CO2 + diphosphate. It carries out the reaction 4-methyl-5-(2-phosphooxyethyl)-thiazole + 4-amino-2-methyl-5-(diphosphooxymethyl)pyrimidine + H(+) = thiamine phosphate + diphosphate. The protein operates within cofactor biosynthesis; thiamine diphosphate biosynthesis; thiamine phosphate from 4-amino-2-methyl-5-diphosphomethylpyrimidine and 4-methyl-5-(2-phosphoethyl)-thiazole: step 1/1. Functionally, condenses 4-methyl-5-(beta-hydroxyethyl)thiazole monophosphate (THZ-P) and 2-methyl-4-amino-5-hydroxymethyl pyrimidine pyrophosphate (HMP-PP) to form thiamine monophosphate (TMP). The chain is Thiamine-phosphate synthase from Methanosarcina barkeri (strain Fusaro / DSM 804).